The primary structure comprises 411 residues: 2,3-bisphosphoglycerate-independent phosphoglycerate mutase (411 aa).

Belongs to the BPG-independent phosphoglycerate mutase family. A-PGAM subfamily.

The catalysed reaction is (2R)-2-phosphoglycerate = (2R)-3-phosphoglycerate. The protein operates within carbohydrate degradation; glycolysis; pyruvate from D-glyceraldehyde 3-phosphate: step 3/5. Functionally, catalyzes the interconversion of 2-phosphoglycerate and 3-phosphoglycerate. The polypeptide is 2,3-bisphosphoglycerate-independent phosphoglycerate mutase (Pyrobaculum calidifontis (strain DSM 21063 / JCM 11548 / VA1)).